A 141-amino-acid polypeptide reads, in one-letter code: Large ribosomal subunit protein uL11 (141 aa).

The tract at residues 1-23 is disordered; it reads MAKQVTGQAKFQVPGGQATPAPP.

Belongs to the universal ribosomal protein uL11 family. Part of the ribosomal stalk of the 50S ribosomal subunit. Interacts with L10 and the large rRNA to form the base of the stalk. L10 forms an elongated spine to which L12 dimers bind in a sequential fashion forming a multimeric L10(L12)X complex. In terms of processing, one or more lysine residues are methylated.

Functionally, forms part of the ribosomal stalk which helps the ribosome interact with GTP-bound translation factors. The sequence is that of Large ribosomal subunit protein uL11 from Rhodopirellula baltica (strain DSM 10527 / NCIMB 13988 / SH1).